We begin with the raw amino-acid sequence, 1369 residues long: DNA-directed RNA polymerase subunit beta' (1369 aa).

A disordered region spans residues 1-43 (MTSSSPKTRKSSTKSKAKRGSKSKKAAEIKAVQRLSKTPPPFR). Basic residues predominate over residues 7–24 (KTRKSSTKSKAKRGSKSK). The Zn(2+) site is built by Cys-253, Cys-320, Cys-327, and Cys-330. The disordered stretch occupies residues 1294 to 1369 (TVDMPSSPVA…LQEEGLLSDE (76 aa)). Residues 1342–1351 (DDELSAEDQM) show a composition bias toward acidic residues. Over residues 1357 to 1369 (LEGLQEEGLLSDE) the composition is skewed to low complexity.

Belongs to the RNA polymerase beta' chain family. RpoC2 subfamily. In terms of assembly, in cyanobacteria the RNAP catalytic core is composed of 2 alpha, 1 beta, 1 beta', 1 gamma and 1 omega subunit. When a sigma factor is associated with the core the holoenzyme is formed, which can initiate transcription. It depends on Zn(2+) as a cofactor.

The enzyme catalyses RNA(n) + a ribonucleoside 5'-triphosphate = RNA(n+1) + diphosphate. Functionally, DNA-dependent RNA polymerase catalyzes the transcription of DNA into RNA using the four ribonucleoside triphosphates as substrates. The polypeptide is DNA-directed RNA polymerase subunit beta' (Prochlorococcus marinus (strain NATL1A)).